The sequence spans 188 residues: MEKQTAIPLRERNIILIGFMGAGKTTIGQLVAKKLYRDFIDVDAEIERRQGMSIPEIFAQKGEAYFRKVERELIVDLCTNTRLKILSLGGGAYLQEEVRRACLAHGIVFFLDLSWDYWKEERLPLIVDSRPVLKNKTLEEVEQLFFQRQSAYALHHSRVVINELEAEQAADQIVESIKWMWDVYEPNR.

Gly-21–Thr-26 contacts ATP. Thr-25 lines the Mg(2+) pocket. Positions 43, 67, and 90 each coordinate substrate. Residue Arg-130 coordinates ATP. Arg-148 contacts substrate.

It belongs to the shikimate kinase family. Monomer. Requires Mg(2+) as cofactor.

It is found in the cytoplasm. It carries out the reaction shikimate + ATP = 3-phosphoshikimate + ADP + H(+). Its pathway is metabolic intermediate biosynthesis; chorismate biosynthesis; chorismate from D-erythrose 4-phosphate and phosphoenolpyruvate: step 5/7. Functionally, catalyzes the specific phosphorylation of the 3-hydroxyl group of shikimic acid using ATP as a cosubstrate. The protein is Shikimate kinase of Geobacillus thermodenitrificans (strain NG80-2).